The chain runs to 186 residues: Ribosome-recycling factor (186 aa).

The protein belongs to the RRF family.

It is found in the cytoplasm. Responsible for the release of ribosomes from messenger RNA at the termination of protein biosynthesis. May increase the efficiency of translation by recycling ribosomes from one round of translation to another. The polypeptide is Ribosome-recycling factor (Rickettsia conorii (strain ATCC VR-613 / Malish 7)).